Reading from the N-terminus, the 355-residue chain is Holliday junction branch migration complex subunit RuvB (355 aa).

Residues 1–26 (MSIQTDDFASSSPAARRVVSTAPASP) are disordered. The large ATPase domain (RuvB-L) stretch occupies residues 5–196 (TDDFASSSPA…FGIVARLEFY (192 aa)). Over residues 9–22 (ASSSPAARRVVSTA) the composition is skewed to low complexity. ATP contacts are provided by residues L35, R36, G77, K80, T81, T82, 143-145 (EDY), R186, Y196, and R233. Position 81 (T81) interacts with Mg(2+). Residues 197 to 267 (SVEELARIVT…IADKALAMLD (71 aa)) are small ATPAse domain (RuvB-S). The head domain (RuvB-H) stretch occupies residues 270–355 (PQGFDVMDRK…TTSGSELFDA (86 aa)). 2 residues coordinate DNA: R325 and R330.

This sequence belongs to the RuvB family. In terms of assembly, homohexamer. Forms an RuvA(8)-RuvB(12)-Holliday junction (HJ) complex. HJ DNA is sandwiched between 2 RuvA tetramers; dsDNA enters through RuvA and exits via RuvB. An RuvB hexamer assembles on each DNA strand where it exits the tetramer. Each RuvB hexamer is contacted by two RuvA subunits (via domain III) on 2 adjacent RuvB subunits; this complex drives branch migration. In the full resolvosome a probable DNA-RuvA(4)-RuvB(12)-RuvC(2) complex forms which resolves the HJ.

It localises to the cytoplasm. The enzyme catalyses ATP + H2O = ADP + phosphate + H(+). In terms of biological role, the RuvA-RuvB-RuvC complex processes Holliday junction (HJ) DNA during genetic recombination and DNA repair, while the RuvA-RuvB complex plays an important role in the rescue of blocked DNA replication forks via replication fork reversal (RFR). RuvA specifically binds to HJ cruciform DNA, conferring on it an open structure. The RuvB hexamer acts as an ATP-dependent pump, pulling dsDNA into and through the RuvAB complex. RuvB forms 2 homohexamers on either side of HJ DNA bound by 1 or 2 RuvA tetramers; 4 subunits per hexamer contact DNA at a time. Coordinated motions by a converter formed by DNA-disengaged RuvB subunits stimulates ATP hydrolysis and nucleotide exchange. Immobilization of the converter enables RuvB to convert the ATP-contained energy into a lever motion, pulling 2 nucleotides of DNA out of the RuvA tetramer per ATP hydrolyzed, thus driving DNA branch migration. The RuvB motors rotate together with the DNA substrate, which together with the progressing nucleotide cycle form the mechanistic basis for DNA recombination by continuous HJ branch migration. Branch migration allows RuvC to scan DNA until it finds its consensus sequence, where it cleaves and resolves cruciform DNA. This Methylibium petroleiphilum (strain ATCC BAA-1232 / LMG 22953 / PM1) protein is Holliday junction branch migration complex subunit RuvB.